Reading from the N-terminus, the 372-residue chain is MNQGIDLQESFIKSLTDLGLSGGLAKAIWMPLPMFLMIIAATVGVLVCVWLERKISAAVQQRIGPEYAGPLGVLQPVADGLKLVFKEDVVPAKADPWLFLFGPILVVMPVFVSYLIVPFGQNLLITDLNVGIFLWISLSSIAPIGLLMAGYASNNKYSLLGGLRAAAQSISYEIPLALSVLAIVMMSNSLSTIDIVEQQSGYGILGWNIWRQPVGFLIFWIAALAECERLPFDLPEAEEELVAGYQTEYAGMKFALFYVGSYVNLVLSALVFAVLYLGGWEFPIPVNALAGWLGVSETNPWLQIITASLGITMTVLKAYFLIFIAILLRWTVPRVRIDQLLDLGWKFLLPVSLVNLLLTAALKLAFPFAFGG.

Helical transmembrane passes span 27–47, 97–117, 130–150, 176–196, 204–224, 254–274, 308–328, and 351–371; these read AIWM…GVLV, WLFL…YLIV, VGIF…LMAG, LALS…IDIV, ILGW…IAAL, FALF…VFAV, SLGI…AILL, and VSLV…FAFG.

Belongs to the complex I subunit 1 family. NDH-1 is composed of at least 11 different subunits.

The protein localises to the cellular thylakoid membrane. The enzyme catalyses a plastoquinone + NADH + (n+1) H(+)(in) = a plastoquinol + NAD(+) + n H(+)(out). The catalysed reaction is a plastoquinone + NADPH + (n+1) H(+)(in) = a plastoquinol + NADP(+) + n H(+)(out). Functionally, NDH-1 shuttles electrons from an unknown electron donor, via FMN and iron-sulfur (Fe-S) centers, to quinones in the respiratory and/or the photosynthetic chain. The immediate electron acceptor for the enzyme in this species is believed to be plastoquinone. Couples the redox reaction to proton translocation, and thus conserves the redox energy in a proton gradient. This chain is NAD(P)H-quinone oxidoreductase subunit 1, found in Microcystis aeruginosa (strain NIES-843 / IAM M-2473).